Consider the following 827-residue polypeptide: Glycerol-3-phosphate acyltransferase (827 aa).

Residues 325–330 carry the HXXXXD motif motif; the sequence is CHRSHM.

This sequence belongs to the GPAT/DAPAT family.

It localises to the cell inner membrane. It catalyses the reaction sn-glycerol 3-phosphate + an acyl-CoA = a 1-acyl-sn-glycero-3-phosphate + CoA. It functions in the pathway phospholipid metabolism; CDP-diacylglycerol biosynthesis; CDP-diacylglycerol from sn-glycerol 3-phosphate: step 1/3. The sequence is that of Glycerol-3-phosphate acyltransferase from Escherichia coli (strain SMS-3-5 / SECEC).